The primary structure comprises 391 residues: S-adenosylmethionine synthase (391 aa).

Residue His14 coordinates ATP. Asp16 lines the Mg(2+) pocket. Position 42 (Glu42) interacts with K(+). Residues Glu55 and Gln98 each contribute to the L-methionine site. The segment at 98–108 is flexible loop; sequence QSVDIAMGVDE. ATP-binding positions include 172-174, 238-239, Asp247, 253-254, Ala270, and Lys274; these read DGK, RF, and RK. An L-methionine-binding site is contributed by Asp247. Position 278 (Lys278) interacts with L-methionine.

This sequence belongs to the AdoMet synthase family. In terms of assembly, homotetramer; dimer of dimers. It depends on Mg(2+) as a cofactor. The cofactor is K(+).

It is found in the cytoplasm. It catalyses the reaction L-methionine + ATP + H2O = S-adenosyl-L-methionine + phosphate + diphosphate. It participates in amino-acid biosynthesis; S-adenosyl-L-methionine biosynthesis; S-adenosyl-L-methionine from L-methionine: step 1/1. Catalyzes the formation of S-adenosylmethionine (AdoMet) from methionine and ATP. The overall synthetic reaction is composed of two sequential steps, AdoMet formation and the subsequent tripolyphosphate hydrolysis which occurs prior to release of AdoMet from the enzyme. The sequence is that of S-adenosylmethionine synthase from Clostridium botulinum (strain Langeland / NCTC 10281 / Type F).